We begin with the raw amino-acid sequence, 31 residues long: SLCDKPHHNCIDGQTCYHTCCQNGLKCVRYP.

Residues Pro6 and Pro31 each carry the 4-hydroxyproline modification.

Contains 4 disulfide bonds. Expressed by the venom duct.

The protein resides in the secreted. In Californiconus californicus (California cone), this protein is Conotoxin Cltx-2.